A 215-amino-acid polypeptide reads, in one-letter code: Octanoyltransferase (215 aa).

The region spanning 35 to 210 is the BPL/LPL catalytic domain; sequence PDTPDQLWVV…HCLEAIVEYG (176 aa). Substrate contacts are provided by residues 74 to 81, 141 to 143, and 154 to 156; these read RGGQVTYH, SVG, and GLA. C172 acts as the Acyl-thioester intermediate in catalysis.

This sequence belongs to the LipB family.

It is found in the cytoplasm. The catalysed reaction is octanoyl-[ACP] + L-lysyl-[protein] = N(6)-octanoyl-L-lysyl-[protein] + holo-[ACP] + H(+). It participates in protein modification; protein lipoylation via endogenous pathway; protein N(6)-(lipoyl)lysine from octanoyl-[acyl-carrier-protein]: step 1/2. Catalyzes the transfer of endogenously produced octanoic acid from octanoyl-acyl-carrier-protein onto the lipoyl domains of lipoate-dependent enzymes. Lipoyl-ACP can also act as a substrate although octanoyl-ACP is likely to be the physiological substrate. In Alkalilimnicola ehrlichii (strain ATCC BAA-1101 / DSM 17681 / MLHE-1), this protein is Octanoyltransferase.